The primary structure comprises 381 residues: Chaperone protein DnaJ (381 aa).

One can recognise a J domain in the interval 3–66 (DYYETLGVER…DKRRMYDSGV (64 aa)). A CR-type zinc finger spans residues 129–211 (GGTAHVKINT…CMGHGRVRTT (83 aa)). Residues C142, C145, C159, C162, C185, C188, C199, and C202 each coordinate Zn(2+). 4 CXXCXGXG motif repeats span residues 142-149 (CQECGGSG), 159-166 (CPDCHGQG), 185-192 (CERCEGHG), and 199-206 (CPSCMGHG). Residues 355-381 (ATHVSQASRPQAGQKKGFFSKLKDALS) are disordered. Residues 356–365 (THVSQASRPQ) are compositionally biased toward polar residues.

The protein belongs to the DnaJ family. Homodimer. Zn(2+) serves as cofactor.

The protein resides in the cytoplasm. Its function is as follows. Participates actively in the response to hyperosmotic and heat shock by preventing the aggregation of stress-denatured proteins and by disaggregating proteins, also in an autonomous, DnaK-independent fashion. Unfolded proteins bind initially to DnaJ; upon interaction with the DnaJ-bound protein, DnaK hydrolyzes its bound ATP, resulting in the formation of a stable complex. GrpE releases ADP from DnaK; ATP binding to DnaK triggers the release of the substrate protein, thus completing the reaction cycle. Several rounds of ATP-dependent interactions between DnaJ, DnaK and GrpE are required for fully efficient folding. Also involved, together with DnaK and GrpE, in the DNA replication of plasmids through activation of initiation proteins. The polypeptide is Chaperone protein DnaJ (Bifidobacterium longum (strain NCC 2705)).